We begin with the raw amino-acid sequence, 257 residues long: Na(+)-translocating NADH-quinone reductase subunit C (257 aa).

A helical transmembrane segment spans residues 13–33; the sequence is LTVVVLLSLICSLIVASAAVL. Thr-224 bears the FMN phosphoryl threonine mark.

Belongs to the NqrC family. Composed of six subunits; NqrA, NqrB, NqrC, NqrD, NqrE and NqrF. The cofactor is FMN.

Its subcellular location is the cell inner membrane. The enzyme catalyses a ubiquinone + n Na(+)(in) + NADH + H(+) = a ubiquinol + n Na(+)(out) + NAD(+). In terms of biological role, NQR complex catalyzes the reduction of ubiquinone-1 to ubiquinol by two successive reactions, coupled with the transport of Na(+) ions from the cytoplasm to the periplasm. NqrA to NqrE are probably involved in the second step, the conversion of ubisemiquinone to ubiquinol. In Haemophilus ducreyi (strain 35000HP / ATCC 700724), this protein is Na(+)-translocating NADH-quinone reductase subunit C.